A 353-amino-acid polypeptide reads, in one-letter code: Transcription termination/antitermination protein NusG (353 aa).

Residues 301 to 335 (VGDMVKIISGPFEDFAGVIKEIDPERQELKVNVTI) enclose the KOW domain.

It belongs to the NusG family.

Regulated by autoinhibition via interaction of the N-terminal and the C-terminal domains. Autoinhibition may prevent NusG from interacting prematurely with other components of the transcription complex or non-specific interactions with other cellular components. Its function is as follows. Participates in transcription elongation, termination and antitermination. The polypeptide is Transcription termination/antitermination protein NusG (Thermotoga maritima (strain ATCC 43589 / DSM 3109 / JCM 10099 / NBRC 100826 / MSB8)).